The primary structure comprises 106 residues: Large ribosomal subunit protein uL24 (106 aa).

This sequence belongs to the universal ribosomal protein uL24 family. As to quaternary structure, part of the 50S ribosomal subunit.

Functionally, one of two assembly initiator proteins, it binds directly to the 5'-end of the 23S rRNA, where it nucleates assembly of the 50S subunit. One of the proteins that surrounds the polypeptide exit tunnel on the outside of the subunit. The polypeptide is Large ribosomal subunit protein uL24 (Thermosipho africanus (strain TCF52B)).